A 141-amino-acid polypeptide reads, in one-letter code: Proteasome maturation protein (141 aa).

Lys39 participates in a covalent cross-link: Glycyl lysine isopeptide (Lys-Gly) (interchain with G-Cter in SUMO2). Residues 68–72 carry the High-affinity association with the preproteasome motif; the sequence is RNIQG.

The protein belongs to the POMP/UMP1 family. Constituent of preproteasomes, but not of mature 20S proteasomes. Within the preproteasome, may directly interact with PSMB1/beta6, PSMB4/beta7, PSMB5/beta5, PSMB6/beta1 and PSMB9/beta1i. Interaction with PSMB8/beta5i has been observed in PubMed:10973495, but not in PubMed:10926487. Forms tetramers. As to expression, strongly expressed from the basal layer to the granular layer of healthy epidermis, whereas in KLICK patients there is a gradual decrease of expression toward the granular layer.

It localises to the cytoplasm. The protein localises to the cytosol. The protein resides in the nucleus. It is found in the microsome membrane. In terms of biological role, molecular chaperone essential for the assembly of standard proteasomes and immunoproteasomes. Degraded after completion of proteasome maturation. Mediates the association of 20S preproteasome with the endoplasmic reticulum. The polypeptide is Proteasome maturation protein (Homo sapiens (Human)).